Reading from the N-terminus, the 75-residue chain is Small ribosomal subunit protein bS18 (75 aa).

The protein belongs to the bacterial ribosomal protein bS18 family. In terms of assembly, part of the 30S ribosomal subunit. Forms a tight heterodimer with protein bS6.

Functionally, binds as a heterodimer with protein bS6 to the central domain of the 16S rRNA, where it helps stabilize the platform of the 30S subunit. The protein is Small ribosomal subunit protein bS18 of Photobacterium profundum (strain SS9).